The sequence spans 302 residues: Probable lipid kinase YegS-like (302 aa).

A DAGKc domain is found at 1-129; it reads MDKDKVLLVL…IDLGAVNGKL (129 aa). ATP is bound by residues Thr-39, 65-71, and Thr-92; that span reads GDGTLRE. Mg(2+) contacts are provided by Arg-210, Asp-213, and Leu-215. Glu-268 serves as the catalytic Proton acceptor.

This sequence belongs to the diacylglycerol/lipid kinase family. YegS lipid kinase subfamily. It depends on Mg(2+) as a cofactor. Ca(2+) is required as a cofactor.

The protein resides in the cytoplasm. Probably phosphorylates lipids; the in vivo substrate is unknown. The protein is Probable lipid kinase YegS-like of Pseudomonas aeruginosa (strain UCBPP-PA14).